The chain runs to 314 residues: Acetaldehyde dehydrogenase 4 (314 aa).

15 to 18 (SGNI) lines the NAD(+) pocket. The Acyl-thioester intermediate role is filled by cysteine 133. NAD(+) contacts are provided by residues 164-172 (SAGPGTRAN) and asparagine 292.

The protein belongs to the acetaldehyde dehydrogenase family.

The catalysed reaction is acetaldehyde + NAD(+) + CoA = acetyl-CoA + NADH + H(+). This is Acetaldehyde dehydrogenase 4 from Burkholderia lata (strain ATCC 17760 / DSM 23089 / LMG 22485 / NCIMB 9086 / R18194 / 383).